Consider the following 340-residue polypeptide: Probable dual-specificity RNA methyltransferase RlmN (340 aa).

The Proton acceptor role is filled by Glu93. The 229-residue stretch at 99 to 327 (TAKRLTVCVS…VSVRYSRGLE (229 aa)) folds into the Radical SAM core domain. A disulfide bridge links Cys106 with Cys332. 3 residues coordinate [4Fe-4S] cluster: Cys113, Cys117, and Cys120. S-adenosyl-L-methionine is bound by residues 160 to 161 (GE), Ser190, 213 to 215 (SLH), and Asn289. Cys332 acts as the S-methylcysteine intermediate in catalysis.

This sequence belongs to the radical SAM superfamily. RlmN family. It depends on [4Fe-4S] cluster as a cofactor.

It localises to the cytoplasm. It catalyses the reaction adenosine(2503) in 23S rRNA + 2 reduced [2Fe-2S]-[ferredoxin] + 2 S-adenosyl-L-methionine = 2-methyladenosine(2503) in 23S rRNA + 5'-deoxyadenosine + L-methionine + 2 oxidized [2Fe-2S]-[ferredoxin] + S-adenosyl-L-homocysteine. The catalysed reaction is adenosine(37) in tRNA + 2 reduced [2Fe-2S]-[ferredoxin] + 2 S-adenosyl-L-methionine = 2-methyladenosine(37) in tRNA + 5'-deoxyadenosine + L-methionine + 2 oxidized [2Fe-2S]-[ferredoxin] + S-adenosyl-L-homocysteine. Its function is as follows. Specifically methylates position 2 of adenine 2503 in 23S rRNA and position 2 of adenine 37 in tRNAs. The polypeptide is Probable dual-specificity RNA methyltransferase RlmN (Rippkaea orientalis (strain PCC 8801 / RF-1) (Cyanothece sp. (strain PCC 8801))).